A 459-amino-acid polypeptide reads, in one-letter code: UDP-N-acetylmuramate--L-alanine ligase (459 aa).

Glycine 113–threonine 119 is an ATP binding site.

This sequence belongs to the MurCDEF family.

Its subcellular location is the cytoplasm. It catalyses the reaction UDP-N-acetyl-alpha-D-muramate + L-alanine + ATP = UDP-N-acetyl-alpha-D-muramoyl-L-alanine + ADP + phosphate + H(+). The protein operates within cell wall biogenesis; peptidoglycan biosynthesis. Functionally, cell wall formation. The polypeptide is UDP-N-acetylmuramate--L-alanine ligase (Persephonella marina (strain DSM 14350 / EX-H1)).